Consider the following 172-residue polypeptide: Protein-export protein SecB (172 aa).

Belongs to the SecB family. Homotetramer, a dimer of dimers. One homotetramer interacts with 1 SecA dimer.

Its subcellular location is the cytoplasm. In terms of biological role, one of the proteins required for the normal export of preproteins out of the cell cytoplasm. It is a molecular chaperone that binds to a subset of precursor proteins, maintaining them in a translocation-competent state. It also specifically binds to its receptor SecA. The chain is Protein-export protein SecB from Maricaulis maris (strain MCS10) (Caulobacter maris).